The primary structure comprises 222 residues: uncharacterized protein (222 aa).

6 N-linked (GlcNAc...) asparagine; by host glycosylation sites follow: Asn-4, Asn-75, Asn-84, Asn-104, Asn-170, and Asn-175. A helical membrane pass occupies residues 200-220 (LIIIIGIVIILLLIIVMIKTV).

The protein localises to the membrane. This is an uncharacterized protein from Acanthamoeba polyphaga (Amoeba).